The following is a 199-amino-acid chain: Small ribosomal subunit protein uS7 (199 aa).

It belongs to the universal ribosomal protein uS7 family. As to quaternary structure, part of the 30S ribosomal subunit.

Its function is as follows. One of the primary rRNA binding proteins, it binds directly to 16S rRNA where it nucleates assembly of the head domain of the 30S subunit. Is located at the subunit interface close to the decoding center. This is Small ribosomal subunit protein uS7 from Cenarchaeum symbiosum (strain A).